The following is a 402-amino-acid chain: Phosphoglycerate kinase (402 aa).

Substrate is bound by residues 24–26 (DFN), Arg40, 63–66 (HFGR), Arg122, and Arg155. ATP is bound by residues Lys206, Gly297, Glu328, and 357 to 360 (GGDS).

Belongs to the phosphoglycerate kinase family. As to quaternary structure, monomer.

Its subcellular location is the cytoplasm. The enzyme catalyses (2R)-3-phosphoglycerate + ATP = (2R)-3-phospho-glyceroyl phosphate + ADP. The protein operates within carbohydrate degradation; glycolysis; pyruvate from D-glyceraldehyde 3-phosphate: step 2/5. The polypeptide is Phosphoglycerate kinase (Synechococcus sp. (strain CC9311)).